The primary structure comprises 123 residues: UPF0102 protein Mflv_4140 (123 aa).

Belongs to the UPF0102 family.

The polypeptide is UPF0102 protein Mflv_4140 (Mycolicibacterium gilvum (strain PYR-GCK) (Mycobacterium gilvum (strain PYR-GCK))).